We begin with the raw amino-acid sequence, 209 residues long: ATP-dependent Clp protease proteolytic subunit 2 (209 aa).

The active-site Nucleophile is the serine 106. Residue histidine 131 is part of the active site.

This sequence belongs to the peptidase S14 family. Fourteen ClpP subunits assemble into 2 heptameric rings which stack back to back to give a disk-like structure with a central cavity, resembling the structure of eukaryotic proteasomes.

It is found in the cytoplasm. It carries out the reaction Hydrolysis of proteins to small peptides in the presence of ATP and magnesium. alpha-casein is the usual test substrate. In the absence of ATP, only oligopeptides shorter than five residues are hydrolyzed (such as succinyl-Leu-Tyr-|-NHMec, and Leu-Tyr-Leu-|-Tyr-Trp, in which cleavage of the -Tyr-|-Leu- and -Tyr-|-Trp bonds also occurs).. In terms of biological role, cleaves peptides in various proteins in a process that requires ATP hydrolysis. Has a chymotrypsin-like activity. Plays a major role in the degradation of misfolded proteins. The chain is ATP-dependent Clp protease proteolytic subunit 2 from Rhizobium etli (strain ATCC 51251 / DSM 11541 / JCM 21823 / NBRC 15573 / CFN 42).